Consider the following 3093-residue polypeptide: Intermembrane lipid transfer protein VPS13A (3093 aa).

The region spanning 3 to 116 (FESVVVDVLN…LMEAKQQELK (114 aa)) is the Chorein N-terminal domain. A TPR 1 repeat occupies 373 to 406 (LTSKKPPGELLVSLEELEKTLDVLNITIARQQAE). A Phosphoserine modification is found at S839. The FFAT signature appears at 842-848 (EFFDAPC). S1416 is subject to Phosphoserine. The region spanning 2209–2454 (VAFHSPYWMV…VFYTWADPVG (246 aa)) is the SHR-BD domain. The stretch at 2860–2898 (ILGLDVLGNPFGLIREFSEGVEAFFYEPYQGAIQGPEEF) is one TPR 2 repeat. The segment at 2953–3027 (PAGFREGITR…SSTFQGIKRA (75 aa)) is required for lipid droplet localization.

The protein belongs to the VPS13 family. In terms of assembly, interacts (via FFAT motif) with VAPA and VAPB. Interacts with RAB7A. Interacts with XK.

It is found in the mitochondrion outer membrane. The protein resides in the endoplasmic reticulum membrane. Its subcellular location is the endosome membrane. It localises to the lysosome membrane. The protein localises to the lipid droplet. It is found in the golgi apparatus. The protein resides in the cytoplasmic vesicle. Its subcellular location is the secretory vesicle. It localises to the neuronal dense core vesicle. Its function is as follows. Mediates the transfer of lipids between membranes at organelle contact sites. Required for the formation or stabilization of ER-mitochondria contact sites which enable transfer of lipids between the ER and mitochondria. Negatively regulates lipid droplet size and motility. Required for efficient lysosomal protein degradation. The sequence is that of Intermembrane lipid transfer protein VPS13A (VPS13A) from Macaca fascicularis (Crab-eating macaque).